A 462-amino-acid polypeptide reads, in one-letter code: 3-isopropylmalate dehydratase large subunit (462 aa).

[4Fe-4S] cluster is bound by residues C337, C397, and C400.

Belongs to the aconitase/IPM isomerase family. LeuC type 1 subfamily. As to quaternary structure, heterodimer of LeuC and LeuD. It depends on [4Fe-4S] cluster as a cofactor.

It carries out the reaction (2R,3S)-3-isopropylmalate = (2S)-2-isopropylmalate. Its pathway is amino-acid biosynthesis; L-leucine biosynthesis; L-leucine from 3-methyl-2-oxobutanoate: step 2/4. Catalyzes the isomerization between 2-isopropylmalate and 3-isopropylmalate, via the formation of 2-isopropylmaleate. In Listeria monocytogenes serovar 1/2a (strain ATCC BAA-679 / EGD-e), this protein is 3-isopropylmalate dehydratase large subunit.